We begin with the raw amino-acid sequence, 633 residues long: MDSASSMRNRSPLGVPEFSYSSQSVNNIRGIKSRNRSSIGHSITDPQVASRINAFYLSNVQSSIPFETDAIGPAYGIGDMIAPEMNDTQSLSASVTNMKKENFYSRPNVSSSSILLTIKRATSSQETKRDRPLPNIRNSAPSATRSHSTPCVAPGYLRTSNEAADVVFPHEEAHFSNHNPKPNNGSPLQKQVVADLPFPLPVSDEEQLDWIRANEDLVHSQDIDEALEWAEYVLRFTQSHLPYLQTYESENLHEINYLESMCENALYKIREFSELENAKAMYFDAYVYETGAFDVESDIQRAWDLYSSSANLGYTRSLYRLGVLLEDQGNLEEAVEYFEKGVSENDSACCWRLSLLILEGMLDGVGEYAHRHASGLELLERSADTADADVPSGLYSHALVNLHEHPGLVDLGSENIRVPIDEATALKSFAKAAFLGHSSAQLRMGAVYEFGKYGCPVVPRYSLFYYSAAAKRGETEADLAVAKWYLNGSDGIPVDEDLAFMHAERASMAGNANAQFLMGYLFDTRGNTEQATYWYNEAAKAGHSEAIERLALLENQIQEPEPENITSSQYPNQDVIKEIPVTASETSPPHAPAVSSTPVTSAPPVSQTKVTKVSVPKKTSKKFLIKHNKCIIS.

The disordered stretch occupies residues 121-151 (ATSSQETKRDRPLPNIRNSAPSATRSHSTPC). Residues 136–149 (IRNSAPSATRSHST) show a composition bias toward polar residues. A Phosphoserine modification is found at Ser-148. 5 Sel1-like repeats span residues 278–314 (AKAMYFDAYVYETGAFDVESDIQRAWDLYSSSANLGY), 315–346 (TRSLYRLGVLLEDQGNLEEAVEYFEKGVSEND), 438–474 (SSAQLRMGAVYEFGKYGCPVVPRYSLFYYSAAAKRGE), 475–511 (TEADLAVAKWYLNGSDGIPVDEDLAFMHAERASMAGN), and 512–543 (ANAQFLMGYLFDTRGNTEQATYWYNEAAKAGH). The tract at residues 583–613 (ASETSPPHAPAVSSTPVTSAPPVSQTKVTKV) is disordered. The span at 592 to 613 (PAVSSTPVTSAPPVSQTKVTKV) shows a compositional bias: low complexity.

The protein localises to the cytoplasm. Involved in septum formation. Required for the proper localization of chs2 at the septum. In Schizosaccharomyces pombe (strain 972 / ATCC 24843) (Fission yeast), this protein is Chitin synthase regulatory factor 4 (chr4).